An 832-amino-acid chain; its full sequence is Beta-galactosidase (832 aa).

The signal sequence occupies residues 1 to 25; that stretch reads MALKLVLMLMVALLAAVWSPPAVTA. The active-site Proton donor is Glu-183. Glu-252 acts as the Nucleophile in catalysis. The SUEL-type lectin domain maps to 741–832; it reads AYGRPKVHLS…KKLAVEAICE (92 aa).

This sequence belongs to the glycosyl hydrolase 35 family.

Its subcellular location is the secreted. It is found in the extracellular space. The protein resides in the apoplast. The catalysed reaction is Hydrolysis of terminal non-reducing beta-D-galactose residues in beta-D-galactosides.. The polypeptide is Beta-galactosidase (Asparagus officinalis (Garden asparagus)).